A 134-amino-acid polypeptide reads, in one-letter code: Profilin-2 (134 aa).

Cysteine 13 and cysteine 118 are oxidised to a cystine. The short motif at 84-100 (AVIRGKKGSGGITIKKT) is the Involved in PIP2 interaction element. Threonine 114 carries the phosphothreonine modification.

This sequence belongs to the profilin family. As to quaternary structure, occurs in many kinds of cells as a complex with monomeric actin in a 1:1 ratio. Post-translationally, phosphorylated by MAP kinases.

It is found in the cytoplasm. The protein resides in the cytoskeleton. Functionally, binds to actin and affects the structure of the cytoskeleton. At high concentrations, profilin prevents the polymerization of actin, whereas it enhances it at low concentrations. The polypeptide is Profilin-2 (Olea europaea (Common olive)).